A 285-amino-acid chain; its full sequence is Troponin T, cardiac muscle (285 aa).

A compositionally biased stretch (acidic residues) spans 1-58 (MSDVEEAVEEYEEQEEAAEEEHEEAVEEEAGGEAEAGEPCTAEDGEEEEGREAEDGPV). Disordered regions lie at residues 1-83 (MSDV…GERV) and 111-206 (RKKE…EKKK). N-acetylserine is present on Ser-2. A Phosphoserine; by CK2 modification is found at Ser-2. The segment covering 66 to 77 (RPFMPNLVPPKI) has biased composition (pro residues). 2 stretches are compositionally biased toward basic and acidic residues: residues 111 to 171 (RKKE…DEAR) and 190 to 206 (QTER…EKKK). Thr-191 bears the Phosphothreonine; by PKC/PRKCA mark. Residue Ser-195 is modified to Phosphoserine; by PKC/PRKCA. Thr-200 is modified (phosphothreonine; by PKC/PRKCA and RAF1). A Phosphothreonine; by PKC/PRKCA modification is found at Thr-281.

This sequence belongs to the troponin T family. Post-translationally, the N-terminus is blocked. In terms of processing, phosphorylation at Thr-200 by PRKCA induces significant reduction in myofilament calcium sensitivity and actomyosin ATPase activity.

Functionally, troponin T is the tropomyosin-binding subunit of troponin, the thin filament regulatory complex which confers calcium-sensitivity to striated muscle actomyosin ATPase activity. The chain is Troponin T, cardiac muscle (TNNT2) from Bos taurus (Bovine).